A 118-amino-acid chain; its full sequence is Ribonuclease P protein component (118 aa).

This sequence belongs to the RnpA family. Consists of a catalytic RNA component (M1 or rnpB) and a protein subunit.

It carries out the reaction Endonucleolytic cleavage of RNA, removing 5'-extranucleotides from tRNA precursor.. Functionally, RNaseP catalyzes the removal of the 5'-leader sequence from pre-tRNA to produce the mature 5'-terminus. It can also cleave other RNA substrates such as 4.5S RNA. The protein component plays an auxiliary but essential role in vivo by binding to the 5'-leader sequence and broadening the substrate specificity of the ribozyme. The protein is Ribonuclease P protein component of Shewanella oneidensis (strain ATCC 700550 / JCM 31522 / CIP 106686 / LMG 19005 / NCIMB 14063 / MR-1).